Consider the following 385-residue polypeptide: Torsin-3A (385 aa).

The signal sequence occupies residues 1 to 21; that stretch reads MFLGALWLLLLLPLRPPGAQG. Residue asparagine 110 is glycosylated (N-linked (GlcNAc...) asparagine). Residue 155 to 162 participates in ATP binding; sequence GWSGTGKN.

It belongs to the ClpA/ClpB family. Torsin subfamily. In terms of assembly, interacts with TOR1AIP1. Post-translationally, N-glycosylated.

The protein resides in the cytoplasm. Its subcellular location is the endoplasmic reticulum lumen. This is Torsin-3A (Tor3a) from Mus musculus (Mouse).